A 678-amino-acid polypeptide reads, in one-letter code: Transcriptional regulator CRZ1 (678 aa).

Over residues 1–21 (MSFSNGNMASYMTSSNGEEQS) the composition is skewed to polar residues. Disordered regions lie at residues 1–50 (MSFS…SHTF) and 159–195 (TPAD…NYSD). The segment covering 34–47 (YRRNNFRNSSNSGS) has biased composition (low complexity). Over residues 166–195 (RPSLTNQFLSPRSNYDGTTRSSGIDSNYSD) the composition is skewed to polar residues. T170 carries the phosphothreonine modification. S175, S245, and S385 each carry phosphoserine. Residues 401-486 (KLKKSRRRSS…SNFNEDNNNN (86 aa)) are disordered. Residues 410 to 428 (SQTSNNSFTSRRSSRSRSI) are compositionally biased toward low complexity. Composition is skewed to basic and acidic residues over residues 429-446 (SPDE…KLLE) and 457-467 (DNNRERYDNDS). Residues 472-486 (NTINSSNFNEDNNNN) show a composition bias toward low complexity. 2 C2H2-type zinc fingers span residues 569 to 591 (FACD…LRTH) and 597 to 619 (FICS…EDLH).

Phosphorylated. Dephosphorylated by calcineurin which leads to rapid translocation from the cytoplasm to the nucleus. Phosphorylated by the cyclin-CDK PHO80-PHO85.

The protein localises to the nucleus. It is found in the cytoplasm. Functionally, involved in the regulation of calcium ion homeostasis. Binds to the calcineurin-dependent response element. Transcriptionally regulates PMC1, PMR1, PMR2A and FKS2. In Saccharomyces cerevisiae (strain ATCC 204508 / S288c) (Baker's yeast), this protein is Transcriptional regulator CRZ1 (CRZ1).